The sequence spans 66 residues: Beta-defensin 107A (66 aa).

The first 22 residues, 1 to 22, serve as a signal peptide directing secretion; sequence MKIFFFIFAALILLAQIFQART. 2 cysteine pairs are disulfide-bonded: Cys37–Cys51 and Cys41–Cys60.

The protein belongs to the beta-defensin family.

It is found in the secreted. Has antibacterial activity. The polypeptide is Beta-defensin 107A (DEFB107A) (Macaca fascicularis (Crab-eating macaque)).